Reading from the N-terminus, the 172-residue chain is Putative acetyltransferase YvoF (172 aa).

It belongs to the transferase hexapeptide repeat family.

This is Putative acetyltransferase YvoF (yvoF) from Bacillus subtilis (strain 168).